A 487-amino-acid polypeptide reads, in one-letter code: UPF0324 membrane protein NE0724 (487 aa).

11 helical membrane-spanning segments follow: residues 19–38 (WAVW…LWGW), 71–93 (PALS…AWSM), 100–119 (FFIG…IIGN), 139–161 (LSLG…GNFF), 181–200 (AIVF…AGFI), 204–226 (VMTG…YALG), 269–291 (VSIL…YTAI), 350–369 (IWID…VWVY), 389–411 (FPKF…SSGS), 426–443 (GPMR…IGII), and 456–478 (ALLY…AWIF).

Belongs to the UPF0324 family.

The protein resides in the cell membrane. The chain is UPF0324 membrane protein NE0724 from Nitrosomonas europaea (strain ATCC 19718 / CIP 103999 / KCTC 2705 / NBRC 14298).